Reading from the N-terminus, the 711-residue chain is RB-associated KRAB zinc finger protein (711 aa).

Positions 8–79 constitute a KRAB domain; sequence LSFKDVAVAF…EGDRHAQRHL (72 aa). Glycyl lysine isopeptide (Lys-Gly) (interchain with G-Cter in SUMO2) cross-links involve residues K97 and K256. The required for interaction with RB1 stretch occupies residues 170–257; it reads AYGESLEDFN…YPRSQMELKP (88 aa). 2 C2H2-type zinc fingers span residues 258 to 280 and 286 to 308; these read FECTQCGKSFCKKSKFIIHQRAH and YACSVCGKSFSQKGTLTVHRRSH. Residue K312 forms a Glycyl lysine isopeptide (Lys-Gly) (interchain with G-Cter in SUMO2) linkage. C2H2-type zinc fingers lie at residues 314-336, 342-364, 370-392, 398-420, 426-448, and 454-476; these read YKCNECGKTFCQKLHLTQHQRTH, YECSECGKSFCQKTHLTLHQRNH, YPCNECGKSFSRKSALNDHQRTH, YKCNECGKSYYRKSTLITHQRTH, YQCSECGKFFSRVSYLTIHYRSH, and YECTECGKTFNLNSAFIRHWKVH. K354 participates in a covalent cross-link: Glycyl lysine isopeptide (Lys-Gly) (interchain with G-Cter in SUMO2). The interaction with AR stretch occupies residues 414–711; sequence ITHQRTHTGE…TVNVLTVEKL (298 aa). The C2H2-type 9; degenerate zinc finger occupies 508–530; it reads YECNECGKTFLDSSAFHRHQSVP. K534 participates in a covalent cross-link: Glycyl lysine isopeptide (Lys-Gly) (interchain with G-Cter in SUMO2). C2H2-type zinc fingers lie at residues 536–558, 564–586, 592–614, 620–642, 648–670, and 676–698; these read YECNICGKSFSDSSCYTVHYRGH, FGCSECGKTFSHNSSLFRHQRVH, YECYECGKFFSQKSYLTIHHRIH, YECSKCGKVFSRMSNLTVHYRSH, YECNECGKVFSQKSYLTVHYRTH, and YECNECGKKFHHRSAFNSHQRIH.

Belongs to the krueppel C2H2-type zinc-finger protein family. Interacts with AR. May also interact with other nuclear hormone receptors such as NR3C1/GR. Interacts with RB1.

The protein resides in the nucleus. May repress E2F-dependent transcription. May promote AR-dependent transcription. This chain is RB-associated KRAB zinc finger protein (Rbak), found in Mus musculus (Mouse).